Reading from the N-terminus, the 336-residue chain is Protein FPV127 (336 aa).

The segment at M1–A22 is disordered.

Belongs to the poxviruses A16/G9/J5 family.

The polypeptide is Protein FPV127 (Vertebrata (FPV)).